The chain runs to 361 residues: Teichoic acids export ATP-binding protein TagH (361 aa).

Positions 13 to 246 (TKEYDLYKSQ…YREFTKWFKG (234 aa)) constitute an ABC transporter domain. ATP is bound at residue 60–67 (GVNGSGKS). The unknown stretch occupies residues 247 to 361 (QSKKEKKHFQ…HDTNATSGVK (115 aa)).

This sequence belongs to the ABC transporter superfamily. Teichoic acids exporter (TC 3.A.1.104.1) family. The complex is composed of two ATP-binding proteins (TagH) and two transmembrane proteins (TagG).

It localises to the cell membrane. It carries out the reaction ATP + H2O + teichoic acidSide 1 = ADP + phosphate + teichoic acidSide 2.. Functionally, part of the ABC transporter complex TagGH involved in teichoic acids export. Responsible for energy coupling to the transport system. The polypeptide is Teichoic acids export ATP-binding protein TagH (Levilactobacillus brevis (strain ATCC 367 / BCRC 12310 / CIP 105137 / JCM 1170 / LMG 11437 / NCIMB 947 / NCTC 947) (Lactobacillus brevis)).